The sequence spans 73 residues: Translational regulator CsrA (73 aa).

It belongs to the CsrA/RsmA family. Homodimer; the beta-strands of each monomer intercalate to form a hydrophobic core, while the alpha-helices form wings that extend away from the core.

It is found in the cytoplasm. A translational regulator that binds mRNA to regulate translation initiation and/or mRNA stability. Usually binds in the 5'-UTR at or near the Shine-Dalgarno sequence preventing ribosome-binding, thus repressing translation. Its main target seems to be the major flagellin gene, while its function is anatagonized by FliW. The protein is Translational regulator CsrA of Clostridium acetobutylicum (strain ATCC 824 / DSM 792 / JCM 1419 / IAM 19013 / LMG 5710 / NBRC 13948 / NRRL B-527 / VKM B-1787 / 2291 / W).